We begin with the raw amino-acid sequence, 529 residues long: Bifunctional purine biosynthesis protein PurH (529 aa).

Residues 2 to 149 (TNLVPVGRAL…KNHRFVNVVT (148 aa)) enclose the MGS-like domain.

It belongs to the PurH family.

The catalysed reaction is (6R)-10-formyltetrahydrofolate + 5-amino-1-(5-phospho-beta-D-ribosyl)imidazole-4-carboxamide = 5-formamido-1-(5-phospho-D-ribosyl)imidazole-4-carboxamide + (6S)-5,6,7,8-tetrahydrofolate. The enzyme catalyses IMP + H2O = 5-formamido-1-(5-phospho-D-ribosyl)imidazole-4-carboxamide. It participates in purine metabolism; IMP biosynthesis via de novo pathway; 5-formamido-1-(5-phospho-D-ribosyl)imidazole-4-carboxamide from 5-amino-1-(5-phospho-D-ribosyl)imidazole-4-carboxamide (10-formyl THF route): step 1/1. The protein operates within purine metabolism; IMP biosynthesis via de novo pathway; IMP from 5-formamido-1-(5-phospho-D-ribosyl)imidazole-4-carboxamide: step 1/1. This chain is Bifunctional purine biosynthesis protein PurH, found in Cereibacter sphaeroides (strain ATCC 17025 / ATH 2.4.3) (Rhodobacter sphaeroides).